Reading from the N-terminus, the 388-residue chain is Succinate--CoA ligase [ADP-forming] subunit beta (388 aa).

Residues K9–H244 enclose the ATP-grasp domain. ATP contacts are provided by residues K46, G53–G55, E99, T102, and E107. Mg(2+) is bound by residues N199 and D213. Substrate contacts are provided by residues N264 and G321–V323.

It belongs to the succinate/malate CoA ligase beta subunit family. In terms of assembly, heterotetramer of two alpha and two beta subunits. Mg(2+) serves as cofactor.

It catalyses the reaction succinate + ATP + CoA = succinyl-CoA + ADP + phosphate. The catalysed reaction is GTP + succinate + CoA = succinyl-CoA + GDP + phosphate. The protein operates within carbohydrate metabolism; tricarboxylic acid cycle; succinate from succinyl-CoA (ligase route): step 1/1. In terms of biological role, succinyl-CoA synthetase functions in the citric acid cycle (TCA), coupling the hydrolysis of succinyl-CoA to the synthesis of either ATP or GTP and thus represents the only step of substrate-level phosphorylation in the TCA. The beta subunit provides nucleotide specificity of the enzyme and binds the substrate succinate, while the binding sites for coenzyme A and phosphate are found in the alpha subunit. In Shewanella pealeana (strain ATCC 700345 / ANG-SQ1), this protein is Succinate--CoA ligase [ADP-forming] subunit beta.